The sequence spans 197 residues: MPTTPATATHSSSNGTAEAIMLELVDENGTTIGTAEKLAAHQAPGQLHRAFSVFLFDEQGRLLLQRRALGKYHSPGVWSNTCCGHPYPGEAPFAAAARRTHEELGLSPSLLAEAGTVRYNHPDPASGLVEQEFNHLFVGLAQTAPKPDPEEVGETAFVTAAELAERHAKAPFSAWFMTVLDAARPAIRELTGPSAGW.

Mn(2+) contacts are provided by His-41 and His-48. The Nudix hydrolase domain maps to 46-183 (QLHRAFSVFL…AWFMTVLDAA (138 aa)). Cys-83 is a catalytic residue. Position 85 (His-85) interacts with Mn(2+). Glu-103 is a Mg(2+) binding site. 2 residues coordinate Mn(2+): Glu-130 and Glu-132. Glu-132 is a catalytic residue.

It belongs to the IPP isomerase type 1 family. Requires Mg(2+) as cofactor. Mn(2+) serves as cofactor.

The protein resides in the cytoplasm. The enzyme catalyses isopentenyl diphosphate = dimethylallyl diphosphate. Its pathway is isoprenoid biosynthesis; dimethylallyl diphosphate biosynthesis; dimethylallyl diphosphate from isopentenyl diphosphate: step 1/1. In terms of biological role, catalyzes the 1,3-allylic rearrangement of the homoallylic substrate isopentenyl (IPP) to its highly electrophilic allylic isomer, dimethylallyl diphosphate (DMAPP). This Streptomyces griseus subsp. griseus (strain JCM 4626 / CBS 651.72 / NBRC 13350 / KCC S-0626 / ISP 5235) protein is Isopentenyl-diphosphate Delta-isomerase.